The sequence spans 521 residues: Calcium-dependent protein kinase 33 (521 aa).

Gly2 is lipidated: N-myristoyl glycine. The interval 15-56 is disordered; the sequence is PQQNGERSVEIENRRRSTHQDPSKISTGTNQPPPWRNPAKHS. Residues 21 to 36 are compositionally biased toward basic and acidic residues; it reads RSVEIENRRRSTHQDP. One can recognise a Protein kinase domain in the interval 73–331; the sequence is YTLSKELGRG…AAEVLKHPWL (259 aa). ATP is bound by residues 79–87 and Lys102; that span reads LGRGQFGVT. Catalysis depends on Asp197, which acts as the Proton acceptor. Residue Ser237 is modified to Phosphoserine. The autoinhibitory domain stretch occupies residues 337–367; it reads ASDKPIDSAVLSRMKQFRAMNKLKKLALKVI. 4 EF-hand domains span residues 374 to 409, 410 to 445, 446 to 481, and 482 to 516; these read EEIQGLKAMFANIDTDNSGTITYEELKEGLAKLGSR, LTEAEVKQLMDAADVDGNGSIDYIEFITATMHRHRL, ESNENVYKAFQHFDKDGSGYITTDELEAALKEYGMG, and DDATIKEILSDVDADNDGRINYDEFCAMMRSGNPQ. The Ca(2+) site is built by Asp387, Asp389, Ser391, Thr393, Glu398, Asp423, Asp425, Asn427, Ser429, Glu434, Asp459, Asp461, Ser463, Tyr465, Glu470, Asp494, Asp496, Asp498, Arg500, and Glu505.

This sequence belongs to the protein kinase superfamily. Ser/Thr protein kinase family. CDPK subfamily. As to quaternary structure, interacts with THI1. Interacts with FD and FDP. Post-translationally, autophosphorylated. In terms of tissue distribution, expressed in primary roots, leaves, inflorescences, siliques and guard cells. Expressed in the shoot apical meristem.

It localises to the cell membrane. It is found in the nucleus. The protein resides in the cytoplasm. It carries out the reaction L-seryl-[protein] + ATP = O-phospho-L-seryl-[protein] + ADP + H(+). The enzyme catalyses L-threonyl-[protein] + ATP = O-phospho-L-threonyl-[protein] + ADP + H(+). Its activity is regulated as follows. Activated by calcium. Autophosphorylation may play an important role in the regulation of the kinase activity. Repressed by THI1 through a negative regulation of the autophosphorylation activity in the presence of Ca(2+). Its function is as follows. Ca(2+)-dependent protein kinase. Negative regulator of stomatal closure and slow anion currents. Unable to phosphorylate THI1 in vitro, but the kinase activity is essential for the stomatal closure regulation. Phosphorylates FD. May play a role in signal transduction pathways that involve calcium as a second messenger. In Arabidopsis thaliana (Mouse-ear cress), this protein is Calcium-dependent protein kinase 33.